The following is a 465-amino-acid chain: 23S rRNA (uracil(1939)-C(5))-methyltransferase RlmD (465 aa).

Residues 1 to 22 are disordered; sequence MSEAVPTSARKSKNAPVAPGPA. The 65-residue stretch at 16–80 folds into the TRAM domain; it reads PVAPGPAPVL…PSYEQATVVD (65 aa). Residues C93, C99, C102, and C181 each coordinate [4Fe-4S] cluster. S-adenosyl-L-methionine-binding residues include Q289, F318, N323, E339, N367, and D388. Residue C421 is the Nucleophile of the active site.

Belongs to the class I-like SAM-binding methyltransferase superfamily. RNA M5U methyltransferase family. RlmD subfamily.

It carries out the reaction uridine(1939) in 23S rRNA + S-adenosyl-L-methionine = 5-methyluridine(1939) in 23S rRNA + S-adenosyl-L-homocysteine + H(+). Catalyzes the formation of 5-methyl-uridine at position 1939 (m5U1939) in 23S rRNA. The protein is 23S rRNA (uracil(1939)-C(5))-methyltransferase RlmD of Burkholderia cenocepacia (strain HI2424).